Consider the following 446-residue polypeptide: Phosphoglucosamine mutase (446 aa).

Catalysis depends on serine 102, which acts as the Phosphoserine intermediate. The Mg(2+) site is built by serine 102, aspartate 239, aspartate 241, and aspartate 243. The residue at position 102 (serine 102) is a Phosphoserine.

It belongs to the phosphohexose mutase family. The cofactor is Mg(2+). Activated by phosphorylation.

The enzyme catalyses alpha-D-glucosamine 1-phosphate = D-glucosamine 6-phosphate. Catalyzes the conversion of glucosamine-6-phosphate to glucosamine-1-phosphate. The sequence is that of Phosphoglucosamine mutase from Solibacter usitatus (strain Ellin6076).